Here is a 250-residue protein sequence, read N- to C-terminus: Ribonucleotide monophosphatase NagD (250 aa).

Residues D9 and D11 each contribute to the Mg(2+) site. D11 is an active-site residue. Residues D11, 42-43 (TN), and K176 each bind substrate. D201 is a binding site for Mg(2+). Position 202–205 (202–205 (NLRT)) interacts with substrate.

Belongs to the HAD-like hydrolase superfamily. NagD family. Monomer. Mg(2+) is required as a cofactor. It depends on Mn(2+) as a cofactor. Requires Co(2+) as cofactor. The cofactor is Zn(2+).

The catalysed reaction is a ribonucleoside 5'-phosphate + H2O = a ribonucleoside + phosphate. In terms of biological role, catalyzes the dephosphorylation of an unusually broad range of substrate including deoxyribo- and ribonucleoside tri-, di-, and monophosphates, as well as polyphosphate and glucose-1-P (Glu1P). The sequence is that of Ribonucleotide monophosphatase NagD (nagD) from Escherichia coli O157:H7.